A 210-amino-acid polypeptide reads, in one-letter code: Ribulose-phosphate 3-epimerase (210 aa).

Serine 9 lines the substrate pocket. 3 residues coordinate a divalent metal cation: histidine 34, aspartate 36, and histidine 68. The active-site Proton acceptor is aspartate 36. Residues histidine 68, 144 to 147 (GFGG), 177 to 179 (DGG), and 199 to 200 (GS) each bind substrate. Residue aspartate 177 participates in a divalent metal cation binding. Aspartate 177 (proton donor) is an active-site residue.

It belongs to the ribulose-phosphate 3-epimerase family. A divalent metal cation is required as a cofactor.

The enzyme catalyses D-ribulose 5-phosphate = D-xylulose 5-phosphate. Its pathway is carbohydrate degradation. Functionally, catalyzes the reversible epimerization of D-ribulose 5-phosphate to D-xylulose 5-phosphate. The chain is Ribulose-phosphate 3-epimerase from Serratia marcescens.